Consider the following 328-residue polypeptide: Mitochondrial GTPase 1 (328 aa).

In terms of domain architecture, CP-type G spans 10–199 (KTTLKRLRDS…MVDTPGIMLP (190 aa)). GTP-binding positions include 57 to 60 (NKCD), 143 to 148 (NVGKSS), and G195.

It belongs to the TRAFAC class YlqF/YawG GTPase family. MTG1 subfamily.

Its subcellular location is the mitochondrion inner membrane. In terms of biological role, mitochondrial GTPase involved in assembly of the large ribosomal subunit. Plays a role in expression of the mitochondrial translational machinery. The polypeptide is Mitochondrial GTPase 1 (Schizosaccharomyces japonicus (strain yFS275 / FY16936) (Fission yeast)).